The chain runs to 448 residues: Solute carrier family 52, riboflavin transporter, member 3-A (448 aa).

3 helical membrane-spanning segments follow: residues 11-31 (AFGLGSWVSINGLWVELPLIV), 40-60 (LPSYLTVIIQFANLGPLLVTL), and 73-93 (LAIYAVLSIGVVACILLAVFW). N-linked (GlcNAc...) asparagine glycosylation occurs at Asn94. 2 helical membrane passes run 107-127 (AFFILTFFLALVDCTSSVTFL) and 138-158 (ITTYFIGEGLSGLVPGLVALA). N-linked (GlcNAc...) asparagine glycans are attached at residues Asn168, Asn171, Asn175, and Asn194. Transmembrane regions (helical) follow at residues 198 to 218 (EIFFSFLAVMTTISLGAFLIL), 280 to 300 (AFIYVMVLWVNSATNGLLPSV), 315 to 335 (LSAALSAVANPVACIIAMFFP), 339 to 359 (LVFLGILCLLGSTFGGYNMAM), 376 to 396 (AIIVLSWVFFTGLLSYVKVMV), and 407 to 427 (ALVWCGAAVQTGSLLGSIIMF).

This sequence belongs to the riboflavin transporter family.

The protein localises to the cell membrane. The enzyme catalyses riboflavin(in) = riboflavin(out). In terms of biological role, plasma membrane transporter mediating the uptake by cells of the water soluble vitamin B2/riboflavin that plays a key role in biochemical oxidation-reduction reactions of the carbohydrate, lipid, and amino acid metabolism. This is Solute carrier family 52, riboflavin transporter, member 3-A (slc52a3a) from Danio rerio (Zebrafish).